The following is a 407-amino-acid chain: Imidazolonepropionase (407 aa).

The Fe(3+) site is built by histidine 75 and histidine 77. Positions 75 and 77 each coordinate Zn(2+). Residues arginine 84, tyrosine 147, and histidine 180 each contribute to the 4-imidazolone-5-propanoate site. Tyrosine 147 serves as a coordination point for N-formimidoyl-L-glutamate. Histidine 245 contacts Fe(3+). Histidine 245 contributes to the Zn(2+) binding site. Glutamine 248 lines the 4-imidazolone-5-propanoate pocket. Position 320 (aspartate 320) interacts with Fe(3+). Zn(2+) is bound at residue aspartate 320. N-formimidoyl-L-glutamate-binding residues include asparagine 322 and glycine 324. Residue serine 325 coordinates 4-imidazolone-5-propanoate.

The protein belongs to the metallo-dependent hydrolases superfamily. HutI family. The cofactor is Zn(2+). Requires Fe(3+) as cofactor.

Its subcellular location is the cytoplasm. The enzyme catalyses 4-imidazolone-5-propanoate + H2O = N-formimidoyl-L-glutamate. It participates in amino-acid degradation; L-histidine degradation into L-glutamate; N-formimidoyl-L-glutamate from L-histidine: step 3/3. Its function is as follows. Catalyzes the hydrolytic cleavage of the carbon-nitrogen bond in imidazolone-5-propanoate to yield N-formimidoyl-L-glutamate. It is the third step in the universal histidine degradation pathway. This chain is Imidazolonepropionase, found in Pseudoalteromonas atlantica (strain T6c / ATCC BAA-1087).